Here is a 313-residue protein sequence, read N- to C-terminus: Olfactory receptor 10Z1 (313 aa).

Residues 1–25 (MGQTNVTSWRDFVFLGFSSSGELQL) lie on the Extracellular side of the membrane. The N-linked (GlcNAc...) asparagine glycan is linked to Asn-5. Residues 26–46 (LLFALFLSLYLVTLTSNVFII) form a helical membrane-spanning segment. The Cytoplasmic segment spans residues 47-54 (IAIRLDSH). The helical transmembrane segment at 55 to 75 (LHTPMYLFLSFLSFSETCYTL) threads the bilayer. Topologically, residues 76–99 (GIIPRMLSGLAGGDQAISYVGCAA) are extracellular. Cysteines 97 and 189 form a disulfide. The helical transmembrane segment at 100-120 (QMFFSASWACTNCFLLAAMGF) threads the bilayer. Over 121 to 139 (DRYVAICAPLHYASHMNPT) the chain is Cytoplasmic. A helical membrane pass occupies residues 140 to 160 (LCAQLVITSFLTGYLFGLGMT). Over 161–197 (LVIFHLSFCSSHEIQHFFCDTPPVLSLACGDTGPSEL) the chain is Extracellular. A helical transmembrane segment spans residues 198–217 (RIFILSLLVLLVSFFFITIS). At 218–237 (YAYILAAILRIPSAEGQKKA) the chain is on the cytoplasmic side. The helical transmembrane segment at 238-258 (FSTCASHLTVVIIHYGCASFV) threads the bilayer. The Extracellular segment spans residues 259 to 271 (YLRPKASYSLERD). A helical transmembrane segment spans residues 272–292 (QLIAMTYTVVTPLLNPIVYSL). The Cytoplasmic portion of the chain corresponds to 293 to 313 (RNRAIQTALRNAFRGRLLGKG).

The protein belongs to the G-protein coupled receptor 1 family.

It is found in the cell membrane. Functionally, odorant receptor. The sequence is that of Olfactory receptor 10Z1 (OR10Z1) from Homo sapiens (Human).